A 279-amino-acid polypeptide reads, in one-letter code: Thymidylate synthase (279 aa).

A dUMP-binding site is contributed by 141–142 (RR). The Nucleophile role is filled by Cys-161. DUMP contacts are provided by residues 181–184 (RSND), Asn-192, and 222–224 (HVY). Residue Asp-184 coordinates (6R)-5,10-methylene-5,6,7,8-tetrahydrofolate. Ala-278 provides a ligand contact to (6R)-5,10-methylene-5,6,7,8-tetrahydrofolate.

Belongs to the thymidylate synthase family. Bacterial-type ThyA subfamily. Homodimer.

The protein localises to the cytoplasm. It carries out the reaction dUMP + (6R)-5,10-methylene-5,6,7,8-tetrahydrofolate = 7,8-dihydrofolate + dTMP. The protein operates within pyrimidine metabolism; dTTP biosynthesis. Its function is as follows. Catalyzes the reductive methylation of 2'-deoxyuridine-5'-monophosphate (dUMP) to 2'-deoxythymidine-5'-monophosphate (dTMP) while utilizing 5,10-methylenetetrahydrofolate (mTHF) as the methyl donor and reductant in the reaction, yielding dihydrofolate (DHF) as a by-product. This enzymatic reaction provides an intracellular de novo source of dTMP, an essential precursor for DNA biosynthesis. The chain is Thymidylate synthase from Bacillus mojavensis.